Here is a 905-residue protein sequence, read N- to C-terminus: Protein translocase subunit SecA (905 aa).

ATP is bound by residues Gln-89, 107-111 (GEGKT), and Asp-502. Zn(2+) is bound by residues Cys-889, Cys-891, Cys-900, and His-901.

It belongs to the SecA family. Monomer and homodimer. Part of the essential Sec protein translocation apparatus which comprises SecA, SecYEG and auxiliary proteins SecDF-YajC and YidC. The cofactor is Zn(2+).

The protein resides in the cell inner membrane. Its subcellular location is the cytoplasm. It catalyses the reaction ATP + H2O + cellular proteinSide 1 = ADP + phosphate + cellular proteinSide 2.. In terms of biological role, part of the Sec protein translocase complex. Interacts with the SecYEG preprotein conducting channel. Has a central role in coupling the hydrolysis of ATP to the transfer of proteins into and across the cell membrane, serving both as a receptor for the preprotein-SecB complex and as an ATP-driven molecular motor driving the stepwise translocation of polypeptide chains across the membrane. This Bartonella tribocorum (strain CIP 105476 / IBS 506) protein is Protein translocase subunit SecA.